We begin with the raw amino-acid sequence, 141 residues long: Nucleoside triphosphatase NudI (141 aa).

The region spanning 1 to 141 (MRQRTIVCPL…RKTLRLKGLL (141 aa)) is the Nudix hydrolase domain. The short motif at 38-59 (GGVEPGERIEEALRREIREELG) is the Nudix box element.

This sequence belongs to the Nudix hydrolase family. NudI subfamily. As to quaternary structure, monomer. It depends on Mg(2+) as a cofactor.

It carries out the reaction a ribonucleoside 5'-triphosphate + H2O = a ribonucleoside 5'-phosphate + diphosphate + H(+). The catalysed reaction is a 2'-deoxyribonucleoside 5'-triphosphate + H2O = a 2'-deoxyribonucleoside 5'-phosphate + diphosphate + H(+). It catalyses the reaction dUTP + H2O = dUMP + diphosphate + H(+). The enzyme catalyses dTTP + H2O = dTMP + diphosphate + H(+). It carries out the reaction dCTP + H2O = dCMP + diphosphate + H(+). Its function is as follows. Catalyzes the hydrolysis of nucleoside triphosphates, with a preference for pyrimidine deoxynucleoside triphosphates (dUTP, dTTP and dCTP). In Escherichia coli (strain ATCC 8739 / DSM 1576 / NBRC 3972 / NCIMB 8545 / WDCM 00012 / Crooks), this protein is Nucleoside triphosphatase NudI.